Consider the following 321-residue polypeptide: Cytochrome c biogenesis protein CcsA (321 aa).

The next 8 helical transmembrane spans lie at 9 to 29, 44 to 64, 71 to 91, 98 to 118, 143 to 163, 225 to 245, 260 to 280, and 288 to 308; these read ILTH…LMTL, GIIS…IYSG, LYES…IPYL, LSVI…SCLS, MLLS…LLVI, IISL…VWAN, WAFI…NINF, and VASI…LLGI.

It belongs to the CcmF/CycK/Ccl1/NrfE/CcsA family. May interact with Ccs1.

It localises to the plastid. It is found in the chloroplast thylakoid membrane. Its function is as follows. Required during biogenesis of c-type cytochromes (cytochrome c6 and cytochrome f) at the step of heme attachment. The protein is Cytochrome c biogenesis protein CcsA of Dioscorea elephantipes (Elephant's foot yam).